The chain runs to 92 residues: UPF0250 protein PD_0532 (92 aa).

Belongs to the UPF0250 family.

In Xylella fastidiosa (strain Temecula1 / ATCC 700964), this protein is UPF0250 protein PD_0532.